The primary structure comprises 415 residues: Serine hydroxymethyltransferase (415 aa).

(6S)-5,6,7,8-tetrahydrofolate-binding positions include L117 and G121–L123. N6-(pyridoxal phosphate)lysine is present on K226.

It belongs to the SHMT family. In terms of assembly, homodimer. It depends on pyridoxal 5'-phosphate as a cofactor.

It is found in the cytoplasm. It carries out the reaction (6R)-5,10-methylene-5,6,7,8-tetrahydrofolate + glycine + H2O = (6S)-5,6,7,8-tetrahydrofolate + L-serine. Its pathway is one-carbon metabolism; tetrahydrofolate interconversion. It participates in amino-acid biosynthesis; glycine biosynthesis; glycine from L-serine: step 1/1. Its function is as follows. Catalyzes the reversible interconversion of serine and glycine with tetrahydrofolate (THF) serving as the one-carbon carrier. This reaction serves as the major source of one-carbon groups required for the biosynthesis of purines, thymidylate, methionine, and other important biomolecules. Also exhibits THF-independent aldolase activity toward beta-hydroxyamino acids, producing glycine and aldehydes, via a retro-aldol mechanism. This is Serine hydroxymethyltransferase from Leptospira borgpetersenii serovar Hardjo-bovis (strain JB197).